The primary structure comprises 394 residues: NAD(P)H-quinone oxidoreductase subunit H (394 aa).

Belongs to the complex I 49 kDa subunit family. In terms of assembly, NDH-1 can be composed of about 15 different subunits; different subcomplexes with different compositions have been identified which probably have different functions.

Its subcellular location is the cellular thylakoid membrane. It catalyses the reaction a plastoquinone + NADH + (n+1) H(+)(in) = a plastoquinol + NAD(+) + n H(+)(out). It carries out the reaction a plastoquinone + NADPH + (n+1) H(+)(in) = a plastoquinol + NADP(+) + n H(+)(out). NDH-1 shuttles electrons from an unknown electron donor, via FMN and iron-sulfur (Fe-S) centers, to quinones in the respiratory and/or the photosynthetic chain. The immediate electron acceptor for the enzyme in this species is believed to be plastoquinone. Couples the redox reaction to proton translocation, and thus conserves the redox energy in a proton gradient. Cyanobacterial NDH-1 also plays a role in inorganic carbon-concentration. In Synechococcus sp. (strain JA-3-3Ab) (Cyanobacteria bacterium Yellowstone A-Prime), this protein is NAD(P)H-quinone oxidoreductase subunit H.